A 419-amino-acid polypeptide reads, in one-letter code: MSFVPVAEDSDFPIHNLPYGVFSTRGNPRPRIGVAIGDQILDLSVIKHLFTGPILSGHQDVFNKPTLNSFMGLGQAAWKEARAFLQNLLSASQARLRDDVELRQRAFTSQASATMYLPATIGDYTDFYSSRHHATNVGVMFRGKENALMPNWLHLPVGYHGRASSVVVSGTPIRRPLGQMRPDDSKPPVYGACKLLDFELEMAFFVGPGNKLGEPIPISKAHEHIFGMVLMNDWSARDIQKWEYVPLGPFLGKSFGTTISPWVVPMDALMPFAVSNPEQDPKPLPYLCHDQPYTFDINLSVALKGEGMSQAATICRSNFKYMYWTMLQQLTHHSVNGCNLQPGDLLASGTISGPEPESFGCMLELSWKGTRAVELGNGQTRKFLLDGDEVIMTGHCQGDGYRIGFGQCAGKVLPALSFA.

Ser2 is subject to N-acetylserine. Position 92 is a phosphoserine (Ser92). Asp126 is a Ca(2+) binding site. Tyr128 contacts substrate. Catalysis depends on His133, which acts as the Proton acceptor. Arg142 contacts substrate. Ca(2+) is bound by residues Glu199, Glu201, and Asp233. Asp233 contacts Mg(2+). Substrate is bound by residues Gln240 and Tyr244. Residues Lys253 and Thr257 each coordinate Mg(2+). A Phosphoserine modification is found at Ser309. Thr350 is a substrate binding site. Ser417 is subject to Phosphoserine.

Belongs to the FAH family. As to quaternary structure, homodimer. It depends on Ca(2+) as a cofactor. Requires Mg(2+) as cofactor.

It carries out the reaction 4-fumarylacetoacetate + H2O = acetoacetate + fumarate + H(+). It participates in amino-acid degradation; L-phenylalanine degradation; acetoacetate and fumarate from L-phenylalanine: step 6/6. The polypeptide is Fumarylacetoacetase (FAH) (Bos taurus (Bovine)).